The chain runs to 551 residues: Cation/acetate symporter ActP (551 aa).

Transmembrane regions (helical) follow at residues 5-25 (HWSALSLFVLPALAQAEALTG), 34-54 (IQAIVMFLLFVGGTLYITYWA), 77-97 (GLAIAGDYMSAASFLGISALV), 104-124 (GLIYSIGFLIGWPIILFLIAE), 150-170 (LSACGSLVVVALYLIAQMVGA), 184-204 (VAVVLVGILMVLYVLFGGMLA), 207-227 (WVQIIKAVMLLSGATFMAIMV), 263-283 (ISALSLGLALMFGTAGLPHIL), 304-324 (GFIGYFYILTFIIGFGAILLV), 356-376 (FFLGFISAVAFATILAVVAGL), 406-426 (VSKITVIILGIVAIGLGILFE), 430-450 (IAFMVGLAFSIAASCNFPIII), 469-489 (LGLSTAVILMILGPTIWVTIL), and 498-518 (YEYPALFSMIAAFVGTWFFSI).

The protein belongs to the sodium:solute symporter (SSF) (TC 2.A.21) family.

The protein localises to the cell inner membrane. Functionally, transports acetate. The protein is Cation/acetate symporter ActP of Yersinia pestis bv. Antiqua (strain Antiqua).